Reading from the N-terminus, the 160-residue chain is MADIRQNIDKKANRRGAARLAAVQALYQMEIGGAGINDVFAEFESHWLGSEVEGDKYLPAEAAFFRDVVAGVVRDQARLDPLIDDALSRGWPLKRIDAILRAVLRAGSYELEHRKDVPARVVVSEYVDVAHAFIEKEEVGMVNAVLDQIARRFRAGEFAR.

Belongs to the NusB family.

In terms of biological role, involved in transcription antitermination. Required for transcription of ribosomal RNA (rRNA) genes. Binds specifically to the boxA antiterminator sequence of the ribosomal RNA (rrn) operons. This Nitrobacter hamburgensis (strain DSM 10229 / NCIMB 13809 / X14) protein is Transcription antitermination protein NusB.